A 59-amino-acid polypeptide reads, in one-letter code: Gallinacin-14 (59 aa).

Residues 1–18 (MGIFLLFLVLLAVPQAAP) form the signal peptide. Disulfide bonds link Cys-25–Cys-54, Cys-32–Cys-47, and Cys-37–Cys-55.

Belongs to the beta-defensin family.

Its subcellular location is the secreted. It is found in the cytoplasmic granule. Functionally, has bactericidal activity. The polypeptide is Gallinacin-14 (GAL14) (Gallus gallus (Chicken)).